We begin with the raw amino-acid sequence, 466 residues long: Soluble pyridine nucleotide transhydrogenase (466 aa).

Residue 36–45 (ERYHQVGGGC) coordinates FAD.

It belongs to the class-I pyridine nucleotide-disulfide oxidoreductase family. The cofactor is FAD.

The protein resides in the cytoplasm. The enzyme catalyses NAD(+) + NADPH = NADH + NADP(+). In terms of biological role, conversion of NADPH, generated by peripheral catabolic pathways, to NADH, which can enter the respiratory chain for energy generation. The chain is Soluble pyridine nucleotide transhydrogenase from Colwellia psychrerythraea (strain 34H / ATCC BAA-681) (Vibrio psychroerythus).